We begin with the raw amino-acid sequence, 559 residues long: PHD finger protein 1 (559 aa).

Residues 29 to 86 enclose the Tudor domain; sequence PRLWEGQDVLARWTDGLLYLGTIKKVDSAREVCLVQFEDDSQFLVLWKDISPAALPGE. PHD-type zinc fingers lie at residues 87–142 and 186–240; these read ELLC…CVFA and QSYC…CRGG. Disordered regions lie at residues 338–434 and 448–526; these read PVEL…TDAR and HPSA…GGVS. The span at 369-386 shows a compositional bias: basic and acidic residues; it reads WRSEPEPLRRRQKGKVEE. Polar residues-rich tracts occupy residues 417–426 and 449–459; these read NQSYEGSSGY and PSASTAGTSGD. Positions 481–515 are enriched in low complexity; sequence SSPHSVTASSSSVPALTPGFSRHSPPSPLCRSLSP.

This sequence belongs to the Polycomblike family. Associated component of the PRC2 complex. Interacts with p53/TP53. Interacts with CHMP1. In terms of tissue distribution, testis-specific.

It is found in the nucleus. Its subcellular location is the cytoplasm. It localises to the cytoskeleton. The protein localises to the microtubule organizing center. The protein resides in the centrosome. Polycomb group (PcG) that specifically binds histone H3 trimethylated at 'Lys-36' (H3K36me3) and recruits the PRC2 complex. Involved in DNA damage response and is recruited at double-strand breaks (DSBs). Acts by binding to H3K36me3, a mark for transcriptional activation, and recruiting the PRC2 complex: it is however unclear whether recruitment of the PRC2 complex to H3K36me3 leads to enhance or inhibit H3K27me3 methylation mediated by the PRC2 complex. According to some reports, PRC2 recruitment by PHF1 promotes H3K27me3 and subsequent gene silencing by inducing spreading of PRC2 and H3K27me3 into H3K36me3 loci. According to other reports, PHF1 recruits the PRC2 complex at double-strand breaks (DSBs) and inhibits the activity of PRC2. Regulates p53/TP53 stability and prolonges its turnover: may act by specifically binding to a methylated from of p53/TP53. In Mus musculus (Mouse), this protein is PHD finger protein 1 (Phf1).